The primary structure comprises 194 residues: Imidazoleglycerol-phosphate dehydratase (194 aa).

Belongs to the imidazoleglycerol-phosphate dehydratase family.

Its subcellular location is the cytoplasm. It catalyses the reaction D-erythro-1-(imidazol-4-yl)glycerol 3-phosphate = 3-(imidazol-4-yl)-2-oxopropyl phosphate + H2O. It participates in amino-acid biosynthesis; L-histidine biosynthesis; L-histidine from 5-phospho-alpha-D-ribose 1-diphosphate: step 6/9. The sequence is that of Imidazoleglycerol-phosphate dehydratase from Chloroherpeton thalassium (strain ATCC 35110 / GB-78).